We begin with the raw amino-acid sequence, 156 residues long: uncharacterized protein (156 aa).

This is an uncharacterized protein from Methanocaldococcus jannaschii (strain ATCC 43067 / DSM 2661 / JAL-1 / JCM 10045 / NBRC 100440) (Methanococcus jannaschii).